Here is a 114-residue protein sequence, read N- to C-terminus: Ribosome-binding factor A (114 aa).

This sequence belongs to the RbfA family. As to quaternary structure, monomer. Binds 30S ribosomal subunits, but not 50S ribosomal subunits or 70S ribosomes.

The protein localises to the cytoplasm. Functionally, one of several proteins that assist in the late maturation steps of the functional core of the 30S ribosomal subunit. Associates with free 30S ribosomal subunits (but not with 30S subunits that are part of 70S ribosomes or polysomes). Required for efficient processing of 16S rRNA. May interact with the 5'-terminal helix region of 16S rRNA. The polypeptide is Ribosome-binding factor A (Listeria welshimeri serovar 6b (strain ATCC 35897 / DSM 20650 / CCUG 15529 / CIP 8149 / NCTC 11857 / SLCC 5334 / V8)).